The primary structure comprises 175 residues: Colicin-B immunity protein (175 aa).

The next 3 helical transmembrane spans lie at 14-32 (ILYA…ILIL), 104-121 (CFWG…TLFY), and 149-168 (IYFT…LLVI).

Its subcellular location is the cell inner membrane. Its function is as follows. This protein is able to protect a cell, which harbors the plasmid ColB encoding colicin B, against colicin B. The polypeptide is Colicin-B immunity protein (cbi) (Escherichia coli).